Here is a 55-residue protein sequence, read N- to C-terminus: Large ribosomal subunit protein bL33C (55 aa).

Belongs to the bacterial ribosomal protein bL33 family.

The polypeptide is Large ribosomal subunit protein bL33C (Kineococcus radiotolerans (strain ATCC BAA-149 / DSM 14245 / SRS30216)).